The following is a 640-amino-acid chain: 1-deoxy-D-xylulose-5-phosphate synthase (640 aa).

Thiamine diphosphate contacts are provided by residues His79 and 120-122 (AHA). Asp151 lines the Mg(2+) pocket. Residues 152–153 (GS), Asn180, Tyr287, and Glu369 contribute to the thiamine diphosphate site. Asn180 contacts Mg(2+).

This sequence belongs to the transketolase family. DXPS subfamily. As to quaternary structure, homodimer. Mg(2+) serves as cofactor. It depends on thiamine diphosphate as a cofactor.

The catalysed reaction is D-glyceraldehyde 3-phosphate + pyruvate + H(+) = 1-deoxy-D-xylulose 5-phosphate + CO2. The protein operates within metabolic intermediate biosynthesis; 1-deoxy-D-xylulose 5-phosphate biosynthesis; 1-deoxy-D-xylulose 5-phosphate from D-glyceraldehyde 3-phosphate and pyruvate: step 1/1. Catalyzes the acyloin condensation reaction between C atoms 2 and 3 of pyruvate and glyceraldehyde 3-phosphate to yield 1-deoxy-D-xylulose-5-phosphate (DXP). The chain is 1-deoxy-D-xylulose-5-phosphate synthase from Hyphomonas neptunium (strain ATCC 15444).